An 839-amino-acid chain; its full sequence is Septin-interacting protein 1 (839 aa).

The interval 22-164 is disordered; the sequence is INRPRGRQSR…ASERNVGAWE (143 aa). Serine 43 and serine 47 each carry phosphoserine. Threonine 53 is subject to Phosphothreonine. Residues 88-101 are compositionally biased toward basic and acidic residues; the sequence is LQADDEKGSQKEGA. A compositionally biased stretch (acidic residues) spans 102–111; that stretch reads EADQGEESDD. Positions 140-149 are enriched in polar residues; the sequence is SRKQPSTTFQ. Residues 167–213 form the G-patch domain; that stretch reads TRGIGAKLLLQMGYEPGKGLGKDLQGISHPVQAHVRKGRGAIGAYGP. A coiled-coil region spans residues 363 to 411; that stretch reads IDNQERECSSQQAALESEHRKLEEIVQLERNHIRTLEESLERVERLIDN.

The protein belongs to the TFP11/STIP family. In terms of assembly, identified in the spliceosome C complex. Interacts with pnut.

The protein resides in the nucleus. Its function is as follows. May be involved in pre-mRNA splicing. The chain is Septin-interacting protein 1 (sip1) from Drosophila melanogaster (Fruit fly).